Consider the following 180-residue polypeptide: NADH-quinone oxidoreductase subunit I (180 aa).

4Fe-4S ferredoxin-type domains follow at residues 48–80 (IVLTRDPDGDERCVACNLCAVACPVGCISLQKS) and 90–119 (EFFRINFSRCIFCGLCEEACPTTAIQLTPD). [4Fe-4S] cluster is bound by residues C60, C63, C66, C70, C99, C102, C105, and C109. The span at 161–174 (KPKGDAENEAKPID) shows a compositional bias: basic and acidic residues. A disordered region spans residues 161–180 (KPKGDAENEAKPIDVKSLLP).

It belongs to the complex I 23 kDa subunit family. NDH-1 is composed of 13 different subunits. Subunits NuoA, H, J, K, L, M, N constitute the membrane sector of the complex. It depends on [4Fe-4S] cluster as a cofactor.

Its subcellular location is the cell inner membrane. The enzyme catalyses a quinone + NADH + 5 H(+)(in) = a quinol + NAD(+) + 4 H(+)(out). Its function is as follows. NDH-1 shuttles electrons from NADH, via FMN and iron-sulfur (Fe-S) centers, to quinones in the respiratory chain. The immediate electron acceptor for the enzyme in this species is believed to be ubiquinone. Couples the redox reaction to proton translocation (for every two electrons transferred, four hydrogen ions are translocated across the cytoplasmic membrane), and thus conserves the redox energy in a proton gradient. This is NADH-quinone oxidoreductase subunit I from Shewanella oneidensis (strain ATCC 700550 / JCM 31522 / CIP 106686 / LMG 19005 / NCIMB 14063 / MR-1).